Reading from the N-terminus, the 718-residue chain is DNA ligase (718 aa).

Residues 44–48, 93–94, and glutamate 127 each bind NAD(+); these read DADYD and SL. Lysine 129 acts as the N6-AMP-lysine intermediate in catalysis. Arginine 150, glutamate 186, lysine 302, and lysine 326 together coordinate NAD(+). Residues cysteine 432, cysteine 435, cysteine 456, and cysteine 462 each coordinate Zn(2+). In terms of domain architecture, BRCT spans 640–718; sequence TAGSPVAGKT…EDEWLALISG (79 aa).

Belongs to the NAD-dependent DNA ligase family. LigA subfamily. Mg(2+) is required as a cofactor. Mn(2+) serves as cofactor.

It catalyses the reaction NAD(+) + (deoxyribonucleotide)n-3'-hydroxyl + 5'-phospho-(deoxyribonucleotide)m = (deoxyribonucleotide)n+m + AMP + beta-nicotinamide D-nucleotide.. Functionally, DNA ligase that catalyzes the formation of phosphodiester linkages between 5'-phosphoryl and 3'-hydroxyl groups in double-stranded DNA using NAD as a coenzyme and as the energy source for the reaction. It is essential for DNA replication and repair of damaged DNA. The chain is DNA ligase from Rhizobium etli (strain CIAT 652).